A 390-amino-acid polypeptide reads, in one-letter code: 4-hydroxy-3-methylbut-2-en-1-yl diphosphate synthase (flavodoxin) (390 aa).

[4Fe-4S] cluster-binding residues include Cys281, Cys284, Cys316, and Glu323.

The protein belongs to the IspG family. [4Fe-4S] cluster is required as a cofactor.

It carries out the reaction (2E)-4-hydroxy-3-methylbut-2-enyl diphosphate + oxidized [flavodoxin] + H2O + 2 H(+) = 2-C-methyl-D-erythritol 2,4-cyclic diphosphate + reduced [flavodoxin]. Its pathway is isoprenoid biosynthesis; isopentenyl diphosphate biosynthesis via DXP pathway; isopentenyl diphosphate from 1-deoxy-D-xylulose 5-phosphate: step 5/6. Functionally, converts 2C-methyl-D-erythritol 2,4-cyclodiphosphate (ME-2,4cPP) into 1-hydroxy-2-methyl-2-(E)-butenyl 4-diphosphate. The protein is 4-hydroxy-3-methylbut-2-en-1-yl diphosphate synthase (flavodoxin) of Salinispora tropica (strain ATCC BAA-916 / DSM 44818 / JCM 13857 / NBRC 105044 / CNB-440).